The chain runs to 382 residues: Galactokinase (382 aa).

34–37 (EHTD) contributes to the substrate binding site. Residue 124–130 (GAGLSSS) participates in ATP binding. The Mg(2+) site is built by Ser130 and Glu162. Catalysis depends on Asp174, which acts as the Proton acceptor. Tyr223 serves as a coordination point for substrate.

Belongs to the GHMP kinase family. GalK subfamily.

It localises to the cytoplasm. It catalyses the reaction alpha-D-galactose + ATP = alpha-D-galactose 1-phosphate + ADP + H(+). It participates in carbohydrate metabolism; galactose metabolism. Its function is as follows. Catalyzes the transfer of the gamma-phosphate of ATP to D-galactose to form alpha-D-galactose-1-phosphate (Gal-1-P). This chain is Galactokinase, found in Salmonella newport (strain SL254).